Here is an 86-residue protein sequence, read N- to C-terminus: Hepcidin-1 (86 aa).

The first 22 residues, M1–A22, serve as a signal peptide directing secretion. Residues V23–F59 constitute a propeptide that is removed on maturation. 4 disulfides stabilise this stretch: C68–C84, C71–C74, C72–C80, and C75–C83.

Belongs to the hepcidin family.

It is found in the secreted. Seems to act as a signaling molecule involved in the maintenance of iron homeostasis. Seems to be required in conjunction with HFE to regulate both intestinal iron absorption and iron storage in macrophages. May also have antimicrobial activity. In Salmo salar (Atlantic salmon), this protein is Hepcidin-1 (hamp1).